The primary structure comprises 149 residues: Transcriptional repressor NrdR (149 aa).

The segment at cysteine 3–cysteine 34 is a zinc-finger region. The region spanning proline 49–glutamine 139 is the ATP-cone domain.

It belongs to the NrdR family. Zn(2+) is required as a cofactor.

Its function is as follows. Negatively regulates transcription of bacterial ribonucleotide reductase nrd genes and operons by binding to NrdR-boxes. In Pasteurella multocida (strain Pm70), this protein is Transcriptional repressor NrdR.